Here is a 237-residue protein sequence, read N- to C-terminus: Ribosomal RNA small subunit methyltransferase G (237 aa).

S-adenosyl-L-methionine is bound by residues Gly-72, Leu-77, 123 to 124 (AE), and Arg-138. The interval 210 to 237 (TALETGTKAAPSRSPRKPGGRKKRGRKR) is disordered. The segment covering 223 to 237 (SPRKPGGRKKRGRKR) has biased composition (basic residues).

It belongs to the methyltransferase superfamily. RNA methyltransferase RsmG family.

The protein resides in the cytoplasm. In terms of biological role, specifically methylates the N7 position of guanine in position 518 of 16S rRNA. This Thermobifida fusca (strain YX) protein is Ribosomal RNA small subunit methyltransferase G.